Consider the following 425-residue polypeptide: Serine hydroxymethyltransferase (425 aa).

Residues Leu122 and 126-128 (GHL) contribute to the (6S)-5,6,7,8-tetrahydrofolate site. An N6-(pyridoxal phosphate)lysine modification is found at Lys231. Residue 355-357 (SPF) participates in (6S)-5,6,7,8-tetrahydrofolate binding.

It belongs to the SHMT family. Homodimer. The cofactor is pyridoxal 5'-phosphate.

The protein resides in the cytoplasm. It catalyses the reaction (6R)-5,10-methylene-5,6,7,8-tetrahydrofolate + glycine + H2O = (6S)-5,6,7,8-tetrahydrofolate + L-serine. It participates in one-carbon metabolism; tetrahydrofolate interconversion. Its pathway is amino-acid biosynthesis; glycine biosynthesis; glycine from L-serine: step 1/1. In terms of biological role, catalyzes the reversible interconversion of serine and glycine with tetrahydrofolate (THF) serving as the one-carbon carrier. This reaction serves as the major source of one-carbon groups required for the biosynthesis of purines, thymidylate, methionine, and other important biomolecules. Also exhibits THF-independent aldolase activity toward beta-hydroxyamino acids, producing glycine and aldehydes, via a retro-aldol mechanism. The chain is Serine hydroxymethyltransferase from Rippkaea orientalis (strain PCC 8801 / RF-1) (Cyanothece sp. (strain PCC 8801)).